Here is a 223-residue protein sequence, read N- to C-terminus: Large ribosomal subunit protein uL3 (223 aa).

Positions 137 to 157 (GRASHGNSRSHNVPGSIGMAQ) are disordered. Gln157 bears the N5-methylglutamine mark.

The protein belongs to the universal ribosomal protein uL3 family. In terms of assembly, part of the 50S ribosomal subunit. Forms a cluster with proteins L14 and L19. Post-translationally, methylated by PrmB.

Its function is as follows. One of the primary rRNA binding proteins, it binds directly near the 3'-end of the 23S rRNA, where it nucleates assembly of the 50S subunit. The sequence is that of Large ribosomal subunit protein uL3 from Burkholderia pseudomallei (strain 1106a).